The following is a 323-amino-acid chain: Methenyltetrahydromethanopterin cyclohydrolase (323 aa).

The protein belongs to the MCH family.

The protein resides in the cytoplasm. It catalyses the reaction 5,10-methenyl-5,6,7,8-tetrahydromethanopterin + H2O = N(5)-formyl-5,6,7,8-tetrahydromethanopterin + H(+). It functions in the pathway one-carbon metabolism; methanogenesis from CO(2); 5,10-methenyl-5,6,7,8-tetrahydromethanopterin from CO(2): step 3/3. Functionally, catalyzes the reversible interconversion of 5-formyl-H(4)MPT to methenyl-H(4)MPT(+). The sequence is that of Methenyltetrahydromethanopterin cyclohydrolase from Methanococcus maripaludis (strain C7 / ATCC BAA-1331).